Reading from the N-terminus, the 267-residue chain is Acetyl-coenzyme A carboxylase carboxyl transferase subunit beta 1 (267 aa).

The CoA carboxyltransferase N-terminal domain occupies threonine 9–glycine 267. The Zn(2+) site is built by cysteine 13, cysteine 16, cysteine 31, and cysteine 34. The C4-type zinc finger occupies cysteine 13 to cysteine 34.

This sequence belongs to the AccD/PCCB family. Acetyl-CoA carboxylase is a heterohexamer composed of biotin carboxyl carrier protein (AccB), biotin carboxylase (AccC) and two subunits each of ACCase subunit alpha (AccA) and ACCase subunit beta (AccD). The cofactor is Zn(2+).

Its subcellular location is the cytoplasm. The catalysed reaction is N(6)-carboxybiotinyl-L-lysyl-[protein] + acetyl-CoA = N(6)-biotinyl-L-lysyl-[protein] + malonyl-CoA. Its pathway is lipid metabolism; malonyl-CoA biosynthesis; malonyl-CoA from acetyl-CoA: step 1/1. Its function is as follows. Component of the acetyl coenzyme A carboxylase (ACC) complex. Biotin carboxylase (BC) catalyzes the carboxylation of biotin on its carrier protein (BCCP) and then the CO(2) group is transferred by the transcarboxylase to acetyl-CoA to form malonyl-CoA. The sequence is that of Acetyl-coenzyme A carboxylase carboxyl transferase subunit beta 1 from Lactiplantibacillus plantarum (strain ATCC BAA-793 / NCIMB 8826 / WCFS1) (Lactobacillus plantarum).